The chain runs to 132 residues: MVKHQAQKKGVKRKQLKNIPSGIVHVKATFNNTIVSITDPAGNTISWASAGKVGYSGSRKSSAFAATVAAQDAAKIAMNSGLKEVEVCLKGTGAGRESAVRALIAAGLVVSVIRDETPVPHNGCRPRKRRRV.

The protein belongs to the universal ribosomal protein uS11 family. In terms of assembly, part of the 30S ribosomal subunit. Interacts with proteins S7 and S18. Binds to IF-3.

In terms of biological role, located on the platform of the 30S subunit, it bridges several disparate RNA helices of the 16S rRNA. Forms part of the Shine-Dalgarno cleft in the 70S ribosome. This chain is Small ribosomal subunit protein uS11, found in Chlamydia abortus (strain DSM 27085 / S26/3) (Chlamydophila abortus).